Here is a 510-residue protein sequence, read N- to C-terminus: Probable serine/threonine-protein kinase 2 (510 aa).

The region spanning 111-364 (YVLNKKIGKG…ALQALGHQWF (254 aa)) is the Protein kinase domain. ATP is bound by residues 117–125 (IGKGSFSTA) and Lys140. The active-site Proton acceptor is Asp230. The interval 408–428 (NDDIYNNNNNNNQLDPNKNHK) is disordered.

The protein belongs to the protein kinase superfamily. Ser/Thr protein kinase family.

Its subcellular location is the membrane. It carries out the reaction L-seryl-[protein] + ATP = O-phospho-L-seryl-[protein] + ADP + H(+). The enzyme catalyses L-threonyl-[protein] + ATP = O-phospho-L-threonyl-[protein] + ADP + H(+). The polypeptide is Probable serine/threonine-protein kinase 2 (PK2) (Plasmodium falciparum (isolate K1 / Thailand)).